Reading from the N-terminus, the 902-residue chain is 4-hydroxyphenylacetate decarboxylase glycyl radical subunit (902 aa).

The region spanning 38–774 is the PFL domain; it reads KRAEDLLDVY…ATLATPDGRL (737 aa). Positions 348 and 507 each coordinate 4-hydroxyphenylacetate. Cys507 serves as the catalytic Cysteine radical intermediate. Catalysis depends on Glu509, which acts as the Proton donor. The 4-hydroxyphenylacetate site is built by His540 and Glu641. The region spanning 782–902 is the Glycine radical domain; sequence GSVSAYAGTD…VIARTEYEGV (121 aa). Gly877 is subject to Glycine radical.

This sequence belongs to the glycyl radical enzyme (GRE) family. HPAD subfamily. As to quaternary structure, heterooctamer consisting of 4 large (HpdB) subunits and 4 small (HpdC) subunits, arranged as a tetramer of heterodimers. Also forms a catalytically inactive homodimer. Requires the activating protein CsdA to generate the key active site glycyl radical that is involved in catalysis. Post-translationally, phosphorylated on serine. Phosphorylation may trigger the formation of the active heterooctamers and thereby regulates enzyme activity.

The catalysed reaction is 4-hydroxyphenylacetate + H(+) = 4-methylphenol + CO2. The enzyme catalyses 3,4-dihydroxyphenylacetate + H(+) = 4-methylcatechol + CO2. Glycyl radical subunit of the HPA decarboxylase that decarboxylates phenylacetates with a hydroxyl group in the p-position. Active toward 4-hydroxyphenylacetate and 3,4-dihydroxyphenylacetate, forming 4-methylphenol and 4-methylcatechol, respectively. Is likely involved in the catabolism of aromatic amino acids such as tyrosine fermentation. 4-methylphenol (p-cresol) formation provides metabolic toxicity, which allows an active suppression of other microbes and may provide growth advantages for the producers in highly competitive environments. The large subunit is the catalytic subunit that binds the substrate. This is 4-hydroxyphenylacetate decarboxylase glycyl radical subunit from Clostridioides difficile (strain CD196) (Peptoclostridium difficile).